The primary structure comprises 428 residues: MLHDDGDASVFVNRDLVEPDTIIDEERIVGRDEQLESVVSFLKPTLQGNRPPNMLLYGPAGTGKSLIIGAVTQQIIELCHSKGERFGVVQVNCQPINTLDQAVYELVQTVASDVGIEPGVPETGVSTKRKYRRLYDLINEHYDSVIFILDEIDLLVGRRANDEPAYSKLLYQLSRASNTNDIEGQVSVAALTNDPKFMENIDGRAESSFNPRDIYFPDYDATQLRQILENRRDAFRQDALTDDVLPLVSAFAAQSHGDARKAIDLFRGAGDLADEQGDQTVREDHVRESQDEIDKDRSLKLIAGLTTQKKISLYATAAVAHCSSATRNSVPSPVGFQVYQWVTEEIDADQMTRETYVKYVKELSTYGLVSTARKSRGRGGGMYMDFTFRGDPESMMHRVVDDTRLERVGTESERLHAVVNAQLREFEE.

Residues 62–66 (TGKSL), Tyr219, and Arg231 contribute to the ATP site.

Belongs to the CDC6/cdc18 family.

Functionally, involved in regulation of DNA replication. This chain is ORC1-type DNA replication protein 5 (orc5), found in Halobacterium salinarum (strain ATCC 700922 / JCM 11081 / NRC-1) (Halobacterium halobium).